Reading from the N-terminus, the 537-residue chain is CTP synthase (537 aa).

The tract at residues 1–265 is amidoligase domain; that stretch reads MTKFIFVTGG…GKYLVKRLGL (265 aa). Residue Ser13 coordinates CTP. Ser13 lines the UTP pocket. An ATP-binding site is contributed by 14–19; that stretch reads GLGKGI. Tyr54 serves as a coordination point for L-glutamine. Asp71 is an ATP binding site. 2 residues coordinate Mg(2+): Asp71 and Glu139. Residues 146-148, 186-191, and Lys222 contribute to the CTP site; these read DIE and KTKPTQ. Residues 186–191 and Lys222 contribute to the UTP site; that span reads KTKPTQ. The Glutamine amidotransferase type-1 domain occupies 290–532; the sequence is EIAIVGKYVK…VKAAKEYKQE (243 aa). An L-glutamine-binding site is contributed by Gly351. The Nucleophile; for glutamine hydrolysis role is filled by Cys378. Residues 379-382, Glu402, and Arg459 contribute to the L-glutamine site; that span reads FGFQ. Residues His505 and Glu507 contribute to the active site.

The protein belongs to the CTP synthase family. As to quaternary structure, homotetramer.

It catalyses the reaction UTP + L-glutamine + ATP + H2O = CTP + L-glutamate + ADP + phosphate + 2 H(+). The enzyme catalyses L-glutamine + H2O = L-glutamate + NH4(+). The catalysed reaction is UTP + NH4(+) + ATP = CTP + ADP + phosphate + 2 H(+). Its pathway is pyrimidine metabolism; CTP biosynthesis via de novo pathway; CTP from UDP: step 2/2. Its activity is regulated as follows. Allosterically activated by GTP, when glutamine is the substrate; GTP has no effect on the reaction when ammonia is the substrate. The allosteric effector GTP functions by stabilizing the protein conformation that binds the tetrahedral intermediate(s) formed during glutamine hydrolysis. Inhibited by the product CTP, via allosteric rather than competitive inhibition. Functionally, catalyzes the ATP-dependent amination of UTP to CTP with either L-glutamine or ammonia as the source of nitrogen. Regulates intracellular CTP levels through interactions with the four ribonucleotide triphosphates. This is CTP synthase from Pyrococcus abyssi (strain GE5 / Orsay).